The chain runs to 134 residues: Fluoride-specific ion channel FluC (134 aa).

Helical transmembrane passes span 7–27, 38–58, 69–89, and 110–130; these read LAVAIGGSLGAMSRYLVTIMA, GTLLVNTLGSFLAGFFLIVLV, LFLFTGFLGAFTTFSSFAAES, and VGSLSMVFIGTLVAKYVLLGH. Na(+) contacts are provided by Gly77 and Thr80.

Belongs to the fluoride channel Fluc/FEX (TC 1.A.43) family.

The protein resides in the cell inner membrane. The enzyme catalyses fluoride(in) = fluoride(out). Na(+) is not transported, but it plays an essential structural role and its presence is essential for fluoride channel function. Functionally, fluoride-specific ion channel. Important for reducing fluoride concentration in the cell, thus reducing its toxicity. The chain is Fluoride-specific ion channel FluC from Legionella pneumophila (strain Paris).